The sequence spans 410 residues: Mating-type locus allele B3 protein (410 aa).

The segment at 1–110 (MSRDPKLSLS…ANVVSPGEGC (110 aa)) is variable domain between B alleles. The segment at residues 107–184 (GEGCRNLSED…NARRRSGWSH (78 aa)) is a DNA-binding region (homeobox; TALE-type). Positions 111–410 (RNLSEDLPAY…PFLCLSVAFV (300 aa)) are highly conserved between B alleles. 2 disordered regions span residues 203 to 224 (AKLS…PSDD) and 278 to 335 (TPKP…TPEL). Over residues 205-219 (LSSSNQSTPPSLTSE) the composition is skewed to polar residues. The Nuclear localization signal signature appears at 276-308 (KKTPKPGMPRPVTTVAKRHPARKTKPAAKPKSR). Positions 291-307 (AKRHPARKTKPAAKPKS) are enriched in basic residues. Residues 312–335 (PRASTTPSIDSTLDSSKLESTPEL) are compositionally biased toward polar residues. The not essential for B3 function stretch occupies residues 333–410 (PELSMCSTAD…PFLCLSVAFV (78 aa)).

It belongs to the TALE/M-ATYP homeobox family.

Its subcellular location is the nucleus. Functionally, the B locus has at least 25 alleles, and any combination of two different B alleles yields a multimeric regulatory protein, that activates genes responsible for the pathogenicity and for the sexual development of the fungus within the corn plant. This chain is Mating-type locus allele B3 protein, found in Mycosarcoma maydis (Corn smut fungus).